The primary structure comprises 441 residues: MSEMTPREIVHELDSHIIGQHNAKRSVAIALRNRWRRMQLDADFRQEVTPKNILMIGPTGVGKTEIARRLAKLARAPFIKVEATKFTEVGYVGKEVEQIIRDLTDSAIKLTREEQMKKCKFRAEEAAEERILDALLPKAKEDWDNEKPDDSATRQVFRKKLREGQLDDKEIEIDVSAPQVGIEIMSPPGMEEMTNQLQSMFQNMGLGASKRRKMPIKEAYKLMVEEEAAKLVNQDDLKEQAIELVEQHGIVFLDEIDKICKRGEASGPDVSREGVQRDLLPLVEGCTVNTKHGMVKTDHILFIASGAFQMSKPSDLIPELQGRLPIRVELDALSADDFKRILTEPHASLTEQQIALMGTEGVKIEFTEDGIESIAQAAWQVNERTENIGARRLHTVMEKLTEELSYEASDKSGSTIVIDAKYVSDHLDNLVQDEDLSRFIL.

ATP-binding positions include Ile18, 60–65 (GVGKTE), Asp254, Glu319, and Arg391.

The protein belongs to the ClpX chaperone family. HslU subfamily. In terms of assembly, a double ring-shaped homohexamer of HslV is capped on each side by a ring-shaped HslU homohexamer. The assembly of the HslU/HslV complex is dependent on binding of ATP.

The protein resides in the cytoplasm. ATPase subunit of a proteasome-like degradation complex; this subunit has chaperone activity. The binding of ATP and its subsequent hydrolysis by HslU are essential for unfolding of protein substrates subsequently hydrolyzed by HslV. HslU recognizes the N-terminal part of its protein substrates and unfolds these before they are guided to HslV for hydrolysis. This is ATP-dependent protease ATPase subunit HslU from Shewanella woodyi (strain ATCC 51908 / MS32).